A 303-amino-acid chain; its full sequence is MKNLLSMEALTVHEIEHLLEQAAQFKRGKKATFNEQTFAVNMFFEPSTRTHTSFEVAEKKLGVEVVSFDAASSSMTKGETLYDTLLTMQAVGVNVAVIRHSEENYYAGLEKLDIAIVNGGDGCGEHPSQSLLDLFTIKEQFGTFQGLKVAIAGDIRHSRVANSNMKVLKRLGAELFFSGPREWFDESYLAYGTYLPVDEIVEKVDVMMLLRVQHERHSGTDEFTKESYHEKFGLTEDRAKKLKEDAIIMHPSPVNRDVEIADSLVESEKSRIVTQMTNGVFIRMAILEAILKEQEMRAKLCTY.

Carbamoyl phosphate contacts are provided by R49 and T50. K77 is a binding site for L-aspartate. Residues R99, H126, and Q129 each coordinate carbamoyl phosphate. The L-aspartate site is built by R159 and R211. Positions 252 and 253 each coordinate carbamoyl phosphate.

It belongs to the aspartate/ornithine carbamoyltransferase superfamily. ATCase family. As to quaternary structure, heterododecamer (2C3:3R2) of six catalytic PyrB chains organized as two trimers (C3), and six regulatory PyrI chains organized as three dimers (R2).

It catalyses the reaction carbamoyl phosphate + L-aspartate = N-carbamoyl-L-aspartate + phosphate + H(+). It functions in the pathway pyrimidine metabolism; UMP biosynthesis via de novo pathway; (S)-dihydroorotate from bicarbonate: step 2/3. In terms of biological role, catalyzes the condensation of carbamoyl phosphate and aspartate to form carbamoyl aspartate and inorganic phosphate, the committed step in the de novo pyrimidine nucleotide biosynthesis pathway. This is Aspartate carbamoyltransferase catalytic subunit from Listeria monocytogenes serovar 1/2a (strain ATCC BAA-679 / EGD-e).